The sequence spans 606 residues: Chaperone protein DnaK (606 aa).

Residue Thr174 is modified to Phosphothreonine; by autocatalysis. Residues 578–606 are disordered; the sequence is YTQAGPQGGTNPGGQGGTDGNVNTDYKVY. The span at 583–596 shows a compositional bias: gly residues; the sequence is PQGGTNPGGQGGTD.

The protein belongs to the heat shock protein 70 family.

Functionally, acts as a chaperone. The protein is Chaperone protein DnaK of Caldicellulosiruptor saccharolyticus (strain ATCC 43494 / DSM 8903 / Tp8T 6331).